The primary structure comprises 1488 residues: WD repeat-containing protein 7 (1488 aa).

7 WD repeats span residues 17 to 56 (APTHCISSILLTDDGGTIVTGCHDGQICLWDLSEELEVNP), 62 to 104 (GHTA…CIEF), 156 to 199 (ISPD…SGLQ), 324 to 366 (VICP…DKQE), 404 to 443 (NEPLKVTASVYIPAHGRLVCGREDGSIIIVPATQTAIVQL), 462 to 507 (GHRN…MKHI), and 558 to 597 (RHLFPIQVIKWRPSDDYLVVGCTDGSVCVWQMDTGALDRC). Disordered stretches follow at residues 761–781 (EEEDEEEVMRQRREESDPEYR) and 911–947 (GDHMKKGPTRPPRPGTPDLSKARDSPPASSNIVQGQI). Residues 768 to 781 (VMRQRREESDPEYR) show a composition bias toward basic and acidic residues. Residue serine 935 is modified to Phosphoserine. A compositionally biased stretch (polar residues) spans 937–947 (PASSNIVQGQI). WD repeat units lie at residues 1349–1388 (PAICRFYMVSYYERSHRIAVGARHGSVALYDIRTGKCQTI) and 1390–1430 (GHKG…LGSI). Phosphoserine is present on serine 1454.

This chain is WD repeat-containing protein 7 (Wdr7), found in Rattus norvegicus (Rat).